The sequence spans 755 residues: Photosystem I P700 chlorophyll a apoprotein A1 (755 aa).

The next 8 membrane-spanning stretches (helical) occupy residues 72 to 95, 158 to 181, 197 to 221, 297 to 315, 352 to 375, 391 to 417, 439 to 461, and 536 to 554; these read IFSAHFGHLAVVFVWLSGMYYHGA, LLCTAIGGLVMAGLCLFAGWFHYH, LNHHLAGLLGLGSLAWAGHQIHVAI, QAHHHLAIAVLFIVAGHMY, WHAQLAINLAMVGSLSIIVAQHMY, ISLFTHHMWIGGFFVVGGAAHGAIYMV, AIISHLNWVCLFLGFHAFGFYVH, and FMVHHIHAMTIHITVLILL. [4Fe-4S] cluster contacts are provided by Cys578 and Cys587. 2 helical membrane passes run 594–615 and 669–691; these read HVFLGLFWMYNCISIVIFHFSW and LSAYGLLFLGAHFVWAFSLMFLF. Chlorophyll a' is bound at residue His680. The chlorophyll a site is built by Met688 and Tyr696. Trp697 contacts phylloquinone. The helical transmembrane segment at 729 to 749 threads the bilayer; it reads AVGVAHYLLGGIVTTWAFFLA.

Belongs to the PsaA/PsaB family. In terms of assembly, the PsaA/B heterodimer binds the P700 chlorophyll special pair and subsequent electron acceptors. PSI consists of a core antenna complex that captures photons, and an electron transfer chain that converts photonic excitation into a charge separation. The cyanobacterial PSI reaction center is composed of one copy each of PsaA,B,C,D,E,F,I,J,K,L,M and X, and forms trimeric complexes. The cofactor is PSI electron transfer chain: 5 chlorophyll a, 1 chlorophyll a', 2 phylloquinones and 3 4Fe-4S clusters. PSI core antenna: 90 chlorophyll a, 22 carotenoids, 3 phospholipids and 1 galactolipid. P700 is a chlorophyll a/chlorophyll a' dimer, A0 is one or more chlorophyll a, A1 is one or both phylloquinones and FX is a shared 4Fe-4S iron-sulfur center..

It is found in the cellular thylakoid membrane. It catalyses the reaction reduced [plastocyanin] + hnu + oxidized [2Fe-2S]-[ferredoxin] = oxidized [plastocyanin] + reduced [2Fe-2S]-[ferredoxin]. Functionally, psaA and PsaB bind P700, the primary electron donor of photosystem I (PSI), as well as the electron acceptors A0, A1 and FX. PSI is a plastocyanin/cytochrome c6-ferredoxin oxidoreductase, converting photonic excitation into a charge separation, which transfers an electron from the donor P700 chlorophyll pair to the spectroscopically characterized acceptors A0, A1, FX, FA and FB in turn. Oxidized P700 is reduced on the lumenal side of the thylakoid membrane by plastocyanin or cytochrome c6. This is Photosystem I P700 chlorophyll a apoprotein A1 from Synechococcus sp. (strain JA-2-3B'a(2-13)) (Cyanobacteria bacterium Yellowstone B-Prime).